The following is a 455-amino-acid chain: Chromosomal replication initiator protein DnaA (455 aa).

The interval methionine 1–arginine 75 is domain I, interacts with DnaA modulators. A domain II region spans residues arginine 75–threonine 117. A compositionally biased stretch (basic and acidic residues) spans arginine 84–serine 93. The segment at arginine 84 to threonine 107 is disordered. The segment at lysine 118–serine 334 is domain III, AAA+ region. The ATP site is built by glycine 162, glycine 164, lysine 165, and threonine 166. The interval arginine 335–serine 455 is domain IV, binds dsDNA.

This sequence belongs to the DnaA family. Oligomerizes as a right-handed, spiral filament on DNA at oriC.

Its subcellular location is the cytoplasm. Plays an essential role in the initiation and regulation of chromosomal replication. ATP-DnaA binds to the origin of replication (oriC) to initiate formation of the DNA replication initiation complex once per cell cycle. Binds the DnaA box (a 9 base pair repeat at the origin) and separates the double-stranded (ds)DNA. Forms a right-handed helical filament on oriC DNA; dsDNA binds to the exterior of the filament while single-stranded (ss)DNA is stabiized in the filament's interior. The ATP-DnaA-oriC complex binds and stabilizes one strand of the AT-rich DNA unwinding element (DUE), permitting loading of DNA polymerase. After initiation quickly degrades to an ADP-DnaA complex that is not apt for DNA replication. Binds acidic phospholipids. The protein is Chromosomal replication initiator protein DnaA of Lactiplantibacillus plantarum (strain ATCC BAA-793 / NCIMB 8826 / WCFS1) (Lactobacillus plantarum).